The following is a 79-amino-acid chain: Acyl carrier protein (79 aa).

Residues 1 to 77 form the Carrier domain; the sequence is MNNVEKKIKK…KSIDYINNKN (77 aa). The residue at position 37 (serine 37) is an O-(pantetheine 4'-phosphoryl)serine.

The protein belongs to the acyl carrier protein (ACP) family. In terms of processing, 4'-phosphopantetheine is transferred from CoA to a specific serine of apo-ACP by AcpS. This modification is essential for activity because fatty acids are bound in thioester linkage to the sulfhydryl of the prosthetic group.

Its subcellular location is the cytoplasm. Its pathway is lipid metabolism; fatty acid biosynthesis. Functionally, carrier of the growing fatty acid chain in fatty acid biosynthesis. The sequence is that of Acyl carrier protein from Buchnera aphidicola subsp. Schizaphis graminum (strain Sg).